A 374-amino-acid polypeptide reads, in one-letter code: tRNA-specific 2-thiouridylase MnmA (374 aa).

Residues 12 to 19 and Met38 each bind ATP; that span reads GMSGGVDS. The tract at residues 98 to 100 is interaction with target base in tRNA; sequence NPD. The active-site Nucleophile is the Cys103. The cysteines at positions 103 and 202 are disulfide-linked. Gly128 serves as a coordination point for ATP. The interval 152–154 is interaction with tRNA; it reads KDQ. Residue Cys202 is the Cysteine persulfide intermediate of the active site. The tract at residues 316–317 is interaction with tRNA; sequence RY.

This sequence belongs to the MnmA/TRMU family.

Its subcellular location is the cytoplasm. It catalyses the reaction S-sulfanyl-L-cysteinyl-[protein] + uridine(34) in tRNA + AH2 + ATP = 2-thiouridine(34) in tRNA + L-cysteinyl-[protein] + A + AMP + diphosphate + H(+). In terms of biological role, catalyzes the 2-thiolation of uridine at the wobble position (U34) of tRNA, leading to the formation of s(2)U34. This Vibrio vulnificus (strain CMCP6) protein is tRNA-specific 2-thiouridylase MnmA.